Here is a 557-residue protein sequence, read N- to C-terminus: GMP synthase [glutamine-hydrolyzing] (557 aa).

Residues 13 to 209 (TILTLDFGSQ…AVDICGANPN (197 aa)) form the Glutamine amidotransferase type-1 domain. C89 functions as the Nucleophile in the catalytic mechanism. Active-site residues include H183 and E185. The region spanning 210–414 (WTMSKFVDQE…LGIAHELVMR (205 aa)) is the GMPS ATP-PPase domain. 238–244 (SGGVDST) contributes to the ATP binding site. Residues R311, D476, K549, and E555 each contribute to the XMP site.

Homodimer. Mg(2+) is required as a cofactor.

Its subcellular location is the cytoplasm. It localises to the cytosol. The catalysed reaction is XMP + L-glutamine + ATP + H2O = GMP + L-glutamate + AMP + diphosphate + 2 H(+). Its pathway is purine metabolism; GMP biosynthesis; GMP from XMP (L-Gln route): step 1/1. Its activity is regulated as follows. Inhibited by 6-diazo-5-oxo-l-norleucine (DON) and acivicin (ACI). Catalyzes the conversion of xanthine monophosphate (XMP) to GMP in the presence of glutamine and ATP through an adenyl-XMP intermediate. This chain is GMP synthase [glutamine-hydrolyzing] (gua1), found in Aspergillus fumigatus (strain ATCC MYA-4609 / CBS 101355 / FGSC A1100 / Af293) (Neosartorya fumigata).